A 238-amino-acid polypeptide reads, in one-letter code: Cysteine-rich venom protein pseudechetoxin-like (238 aa).

Residues 1-19 (MIAFIVLLSLAAVLQQSSG) form the signal peptide. Positions 20-28 (TVDFASESS) are excised as a propeptide. Positions 38-164 (VDKHNALRRS…STKYLYVCQY (127 aa)) constitute an SCP domain. Cystine bridges form between cysteine 75–cysteine 153, cysteine 92–cysteine 165, cysteine 148–cysteine 162, cysteine 184–cysteine 191, cysteine 187–cysteine 196, cysteine 200–cysteine 233, cysteine 209–cysteine 227, and cysteine 218–cysteine 231. Residues 200 to 233 (CKHEDDFSNCKALAKNSKCQTAWIKSKCPATCFC) enclose the ShKT domain.

This sequence belongs to the CRISP family. In terms of tissue distribution, expressed by the venom gland.

The protein resides in the secreted. Blocks olfactory (CNGA2) and retinal (CNGA1) CNG channel currents. Does not affect neither depolarization- nor caffeine-induced contraction of smooth muscle. This Hoplocephalus stephensii (Stephens's banded snake) protein is Cysteine-rich venom protein pseudechetoxin-like.